A 303-amino-acid chain; its full sequence is Tyrosine-protein phosphatase 3 (303 aa).

The region spanning 24 to 292 (YMIIEGLNEE…VFLYTVSQEL (269 aa)) is the Tyrosine-protein phosphatase domain. Cys227 acts as the Phosphocysteine intermediate in catalysis.

It belongs to the protein-tyrosine phosphatase family. Non-receptor class subfamily.

The protein localises to the cytoplasm. The enzyme catalyses O-phospho-L-tyrosyl-[protein] + H2O = L-tyrosyl-[protein] + phosphate. Functionally, contributes to dephosphorylation of tyrosine 15 of cdc2. The chain is Tyrosine-protein phosphatase 3 (pyp3) from Schizosaccharomyces pombe (strain 972 / ATCC 24843) (Fission yeast).